Consider the following 274-residue polypeptide: Large ribosomal subunit protein uL2cz/uL2cy (274 aa).

2 disordered regions span residues 1-21 (MAIH…VDSQ) and 225-254 (PVDH…PALG).

This sequence belongs to the universal ribosomal protein uL2 family. As to quaternary structure, part of the 50S ribosomal subunit.

It localises to the plastid. The protein resides in the chloroplast. This chain is Large ribosomal subunit protein uL2cz/uL2cy (rpl2-A), found in Draba nemorosa (Woodland whitlowgrass).